A 406-amino-acid chain; its full sequence is MADGNEDLRADDLPGPAFESYESMELACPAERSGHVAVSDGRHMFVWGGYKSNQVRGLYDFYLPREELWIYNMETGRWKKINTEGDVPPSMSGSCAVCVDRVLYLFGGHHSRGNTNKFYMLDSRSTDRVLQWERIDCQGIPPSSKDKLGVWVYKNKLIFFGGYGYLPEDKVLGTFEFDETSFWNSSHPRGWNDHVHILDTETFTWSQPITTGKAPSPRAAHACATVGNRGFVFGGRYRDARMNDLHYLNLDTWEWNELIPQGICPVGRSWHSLTPVSSDHLFLFGGFTTDKQPLSDAWTYCISKNEWIQFNHPYTEKPRLWHTACASDEGEVIVFGGCANNLLVHHRAAHSNEILIFSVQPKSLVRLSLEAVICFKEMLANSWNCLPKHLLHSVNQRFGSNNTSGS.

6 Kelch repeats span residues 31-85 (ERSG…NTEG), 92-136 (SGSC…ERID), 148-207 (LGVW…TWSQ), 221-259 (HACATVGNRGFVFGGRYRDARMNDLHYLNLDTWEWNELI), 271-311 (HSLT…IQFN), and 322-359 (HTACASDEGEVIVFGGCANNLLVHHRAAHSNEILIFSV).

Component of a CRL2(KLHDC2) E3 ubiquitin-protein ligase complex, also named ECS(KLHDC2) complex, composed of CUL2, Elongin BC (ELOB and ELOC), RBX1 and substrate-specific adapter KLHDC2. May form oligomers as a KLHDC2-ELOB-ELOC complex; this interaction is autoinhibitory for the E3 ligase complex as the substrate-binding site of KLHDC2 is blocked in the oligomer. Interacts with CREB3; interaction is direct and specific as it does not interact with CREB1, ATF4, ATF6, JUN, FOS, CEBPA or herpes simplex virus transactivator VP16. Autoubiquitinated by the CRL2(KLHDC2) E3 ligase complex. In terms of tissue distribution, widely expressed, with high levels in skeletal muscle, heart, pancreas and liver. Undetectable in peripheral blood leukocytes.

It is found in the nucleus. It functions in the pathway protein modification; protein ubiquitination. Functionally, substrate-recognition component of a Cul2-RING (CRL2) E3 ubiquitin-protein ligase complex of the DesCEND (destruction via C-end degrons) pathway, which recognizes a C-degron located at the extreme C terminus of target proteins, leading to their ubiquitination and degradation. The C-degron recognized by the DesCEND pathway is usually a motif of less than ten residues and can be present in full-length proteins, truncated proteins or proteolytically cleaved forms. The CRL2(KLHDC2) complex specifically recognizes proteins with a diglycine (Gly-Gly) at the C-terminus, leading to their ubiquitination and degradation. The CRL2(KLHDC2) complex mediates ubiquitination and degradation of truncated SELENOK and SELENOS selenoproteins produced by failed UGA/Sec decoding, which end with a diglycine. The CRL2(KLHDC2) complex also recognizes proteolytically cleaved proteins ending with Gly-Gly, such as the N-terminal fragment of USP1, leading to their degradation. May also act as an indirect repressor of CREB3-mediated transcription by interfering with CREB3-DNA-binding. This is Kelch domain-containing protein 2 from Homo sapiens (Human).